The sequence spans 95 residues: Putative defensin-like protein 252 (95 aa).

Residues 1 to 27 form the signal peptide; the sequence is MRCVTSFVVLCILMFLVVNNVKVDVKA. 4 disulfides stabilise this stretch: C34–C93, C45–C72, C56–C85, and C70–C87.

The protein belongs to the DEFL family.

It is found in the secreted. The sequence is that of Putative defensin-like protein 252 (SCRL13) from Arabidopsis thaliana (Mouse-ear cress).